Here is a 38-residue protein sequence, read N- to C-terminus: Large ribosomal subunit protein bL36 (38 aa).

Belongs to the bacterial ribosomal protein bL36 family.

This chain is Large ribosomal subunit protein bL36, found in Prochlorococcus marinus (strain SARG / CCMP1375 / SS120).